A 172-amino-acid polypeptide reads, in one-letter code: NADH-quinone oxidoreductase subunit B (172 aa).

Residues Cys46, Cys47, Cys111, and Cys141 each coordinate [4Fe-4S] cluster.

It belongs to the complex I 20 kDa subunit family. In terms of assembly, NDH-1 is composed of 14 different subunits. Subunits NuoB, C, D, E, F, and G constitute the peripheral sector of the complex. Requires [4Fe-4S] cluster as cofactor.

It localises to the cell membrane. It catalyses the reaction a quinone + NADH + 5 H(+)(in) = a quinol + NAD(+) + 4 H(+)(out). In terms of biological role, NDH-1 shuttles electrons from NADH, via FMN and iron-sulfur (Fe-S) centers, to quinones in the respiratory chain. The immediate electron acceptor for the enzyme in this species is believed to be a menaquinone. Couples the redox reaction to proton translocation (for every two electrons transferred, four hydrogen ions are translocated across the cytoplasmic membrane), and thus conserves the redox energy in a proton gradient. This chain is NADH-quinone oxidoreductase subunit B, found in Brevibacillus brevis (strain 47 / JCM 6285 / NBRC 100599).